The following is a 160-amino-acid chain: 6,7-dimethyl-8-ribityllumazine synthase (160 aa).

5-amino-6-(D-ribitylamino)uracil contacts are provided by residues Trp-26, Ala-59–Glu-61, and Val-81–Ile-83. Gly-86–Thr-87 serves as a coordination point for (2S)-2-hydroxy-3-oxobutyl phosphate. Residue His-89 is the Proton donor of the active site. Phe-114 serves as a coordination point for 5-amino-6-(D-ribitylamino)uracil. Residue Arg-128 coordinates (2S)-2-hydroxy-3-oxobutyl phosphate.

This sequence belongs to the DMRL synthase family.

It carries out the reaction (2S)-2-hydroxy-3-oxobutyl phosphate + 5-amino-6-(D-ribitylamino)uracil = 6,7-dimethyl-8-(1-D-ribityl)lumazine + phosphate + 2 H2O + H(+). The protein operates within cofactor biosynthesis; riboflavin biosynthesis; riboflavin from 2-hydroxy-3-oxobutyl phosphate and 5-amino-6-(D-ribitylamino)uracil: step 1/2. Catalyzes the formation of 6,7-dimethyl-8-ribityllumazine by condensation of 5-amino-6-(D-ribitylamino)uracil with 3,4-dihydroxy-2-butanone 4-phosphate. This is the penultimate step in the biosynthesis of riboflavin. This is 6,7-dimethyl-8-ribityllumazine synthase from Frankia casuarinae (strain DSM 45818 / CECT 9043 / HFP020203 / CcI3).